Reading from the N-terminus, the 921-residue chain is 2-oxoadipate dehydrogenase complex component E1 (921 aa).

N6-succinyllysine occurs at positions 184 and 189. The interval 300 to 319 (GKTRGRQQSREDGDYSPNGS) is disordered. Residues K801 and K819 each carry the N6-succinyllysine modification.

It belongs to the alpha-ketoglutarate dehydrogenase family. In terms of assembly, the 2-oxoadipate dehydrogenase complex is composed of OADH (2-oxoadipate dehydrogenase; E1a), DLST (dihydrolipoamide succinyltransferase; E2) and DLD (dihydrolipoamide dehydrogenase; E3). E1a functional unit is a dimer. Thiamine diphosphate is required as a cofactor.

The protein resides in the mitochondrion. The enzyme catalyses N(6)-[(R)-lipoyl]-L-lysyl-[protein] + 2-oxoadipate + H(+) = N(6)-[(R)-S(8)-glutaryldihydrolipoyl]-L-lysyl-[protein] + CO2. The protein operates within amino-acid degradation. Functionally, 2-oxoadipate dehydrogenase (E1a) component of the 2-oxoadipate dehydrogenase complex (OADHC). Participates in the first step, rate limiting for the overall conversion of 2-oxoadipate (alpha-ketoadipate) to glutaryl-CoA and CO(2) catalyzed by the whole OADHC. Catalyzes the irreversible decarboxylation of 2-oxoadipate via the thiamine diphosphate (ThDP) cofactor and subsequent transfer of the decarboxylated acyl intermediate on an oxidized dihydrolipoyl group that is covalently amidated to the E2 enzyme (dihydrolipoyllysine-residue succinyltransferase or DLST). Can catalyze the decarboxylation of 2-oxoglutarate in vitro, but at a much lower rate than 2-oxoadipate. Responsible for the last step of L-lysine, L-hydroxylysine and L-tryptophan catabolism with the common product being 2-oxoadipate. In Mus musculus (Mouse), this protein is 2-oxoadipate dehydrogenase complex component E1 (Dhtkd1).